We begin with the raw amino-acid sequence, 90 residues long: Nodulation protein NolS (90 aa).

Its function is as follows. Involved in nodulation of a particular host, M.lupulina. The sequence is that of Nodulation protein NolS (nolS) from Sinorhizobium meliloti (strain Sm2011 / Rm2011 / 2011).